The sequence spans 408 residues: Tyrosine--tRNA ligase (408 aa).

Tyr-35 contributes to the L-tyrosine binding site. Residues 40–49 (PTADSLHVGH) carry the 'HIGH' region motif. Tyr-168 and Gln-172 together coordinate L-tyrosine. The 'KMSKS' region signature appears at 228–232 (KMGKT). Lys-231 serves as a coordination point for ATP. Positions 342 to 407 (INIIDLLLKT…GKKTYHRVKL (66 aa)) constitute an S4 RNA-binding domain.

Belongs to the class-I aminoacyl-tRNA synthetase family. TyrS type 1 subfamily. In terms of assembly, homodimer.

It localises to the cytoplasm. The catalysed reaction is tRNA(Tyr) + L-tyrosine + ATP = L-tyrosyl-tRNA(Tyr) + AMP + diphosphate + H(+). Its function is as follows. Catalyzes the attachment of tyrosine to tRNA(Tyr) in a two-step reaction: tyrosine is first activated by ATP to form Tyr-AMP and then transferred to the acceptor end of tRNA(Tyr). The chain is Tyrosine--tRNA ligase from Acetivibrio thermocellus (strain ATCC 27405 / DSM 1237 / JCM 9322 / NBRC 103400 / NCIMB 10682 / NRRL B-4536 / VPI 7372) (Clostridium thermocellum).